The following is a 787-amino-acid chain: Patatin-like phospholipase domain-containing protein OOU_Y34scaffold00095g16.3 (787 aa).

2 disordered regions span residues 47 to 69 and 137 to 164; these read APDT…ARSF and KVVG…PGRR. A compositionally biased stretch (low complexity) spans 59–69; the sequence is ASPRSPSARSF. A compositionally biased stretch (basic residues) spans 144–157; it reads HRQKKSSRRRKRSK. Residues 180–200 form a helical membrane-spanning segment; the sequence is WPFLLIVGAWIVGLAVTYLFT. Positions 375 to 566 constitute a PNPLA domain; sequence LCLSGGASFA…RTDIPIRALN (192 aa). The GXSXG motif lies at 406-410; the sequence is GTSGG. Ser-408 serves as the catalytic Nucleophile. Asp-553 (proton acceptor) is an active-site residue. Positions 745-787 are disordered; sequence GTDEEITTNDEMEFASDEKAVLTEDEGQFDGVTDNTEGSPLLK. Residues 746-759 show a composition bias toward acidic residues; it reads TDEEITTNDEMEFA. Polar residues predominate over residues 777–787; sequence TDNTEGSPLLK.

It belongs to the PLPL family.

It localises to the membrane. Functionally, probable lipid hydrolase. The sequence is that of Patatin-like phospholipase domain-containing protein OOU_Y34scaffold00095g16.3 from Pyricularia oryzae (strain Y34) (Rice blast fungus).